We begin with the raw amino-acid sequence, 52 residues long: Large ribosomal subunit protein bL33 (52 aa).

Belongs to the bacterial ribosomal protein bL33 family.

This is Large ribosomal subunit protein bL33 (rpmG) from Chlamydia muridarum (strain MoPn / Nigg).